Consider the following 241-residue polypeptide: Small ribosomal subunit protein uS10m (241 aa).

Residues 1–54 (MIAGVLRRSSLPSRQTLSAALASFNSCISHNLTPATTGASVSSRFTLASSPNSF) constitute a mitochondrion transit peptide.

This sequence belongs to the universal ribosomal protein uS10 family. Component of the mitochondrial ribosome small subunit.

It localises to the mitochondrion. This is Small ribosomal subunit protein uS10m (RPS10) from Arabidopsis thaliana (Mouse-ear cress).